We begin with the raw amino-acid sequence, 331 residues long: uncharacterized protein (331 aa).

This sequence belongs to the proline racemase family.

This is an uncharacterized protein from Bacillus anthracis.